The chain runs to 405 residues: Glucan 1,3-beta-glucosidase A (405 aa).

The signal sequence occupies residues 1–14; sequence MLPLLLCIVPYCWS. Glu199 functions as the Proton donor in the catalytic mechanism. 2 disulfide bridges follow: Cys280–Cys405 and Cys306–Cys332. Catalysis depends on Glu298, which acts as the Nucleophile.

Belongs to the glycosyl hydrolase 5 (cellulase A) family. As to quaternary structure, monomer. The cofactor is Mn(2+).

It localises to the secreted. The enzyme catalyses Successive hydrolysis of beta-D-glucose units from the non-reducing ends of (1-&gt;3)-beta-D-glucans, releasing alpha-glucose.. Beta-glucanases participate in the metabolism of beta-glucan, the main structural component of the cell wall. It could also function biosynthetically as a transglycosylase. This is Glucan 1,3-beta-glucosidase A (exgA) from Aspergillus oryzae (strain ATCC 42149 / RIB 40) (Yellow koji mold).